The primary structure comprises 279 residues: DegV domain-containing protein SAR1438 (279 aa).

The DegV domain occupies 4–278 (QIIVTDSTSD…QGAIGLVVLK (275 aa)). The hexadecanoate site is built by T61 and S93.

In terms of biological role, may bind long-chain fatty acids, such as palmitate, and may play a role in lipid transport or fatty acid metabolism. The protein is DegV domain-containing protein SAR1438 of Staphylococcus aureus (strain MRSA252).